The chain runs to 161 residues: 3-isopropylmalate dehydratase small subunit (161 aa).

The protein belongs to the LeuD family. LeuD type 2 subfamily. As to quaternary structure, heterodimer of LeuC and LeuD.

It carries out the reaction (2R,3S)-3-isopropylmalate = (2S)-2-isopropylmalate. It participates in amino-acid biosynthesis; L-leucine biosynthesis; L-leucine from 3-methyl-2-oxobutanoate: step 2/4. Functionally, catalyzes the isomerization between 2-isopropylmalate and 3-isopropylmalate, via the formation of 2-isopropylmaleate. The polypeptide is 3-isopropylmalate dehydratase small subunit (Clostridium botulinum (strain Eklund 17B / Type B)).